The sequence spans 338 residues: uncharacterized protein (338 aa).

An N-terminal signal peptide occupies residues 1–29 (MIKQLYKNITICTLALSTTFTVLPATSYA).

It belongs to the aerolysin family.

This is an uncharacterized protein from Staphylococcus aureus (strain MSSA476).